We begin with the raw amino-acid sequence, 98 residues long: MPIIYMNIMLAFLISLLGMLFYRSHLMSSLLCLEGMMLSLFIMSTLMALNMHFPLANIVPIALLVFAACEAAVGLALLVSISNTYGLDYIHNLNLLQC.

The next 3 membrane-spanning stretches (helical) occupy residues 1 to 21, 29 to 49, and 58 to 78; these read MPIIYMNIMLAFLISLLGMLF, SLLCLEGMMLSLFIMSTLMAL, and IVPIALLVFAACEAAVGLALL.

Belongs to the complex I subunit 4L family. As to quaternary structure, core subunit of respiratory chain NADH dehydrogenase (Complex I) which is composed of 45 different subunits.

It is found in the mitochondrion inner membrane. The catalysed reaction is a ubiquinone + NADH + 5 H(+)(in) = a ubiquinol + NAD(+) + 4 H(+)(out). In terms of biological role, core subunit of the mitochondrial membrane respiratory chain NADH dehydrogenase (Complex I) which catalyzes electron transfer from NADH through the respiratory chain, using ubiquinone as an electron acceptor. Part of the enzyme membrane arm which is embedded in the lipid bilayer and involved in proton translocation. The protein is NADH-ubiquinone oxidoreductase chain 4L (MT-ND4L) of Trachypithecus obscurus (Dusky leaf-monkey).